A 125-amino-acid chain; its full sequence is uncharacterized protein (125 aa).

The helical transmembrane segment at 100-120 (YFKVAFALAVLTPLAIWIFYI) threads the bilayer.

It is found in the membrane. This is an uncharacterized protein from Saccharomyces cerevisiae (strain ATCC 204508 / S288c) (Baker's yeast).